The sequence spans 189 residues: dCTP deaminase (189 aa).

DCTP contacts are provided by residues 112–117, 136–138, glutamine 157, tyrosine 171, and glutamine 181; these read KSTYAR and TLE. The active-site Proton donor/acceptor is glutamate 138.

It belongs to the dCTP deaminase family. Homotrimer.

It catalyses the reaction dCTP + H2O + H(+) = dUTP + NH4(+). It participates in pyrimidine metabolism; dUMP biosynthesis; dUMP from dCTP (dUTP route): step 1/2. Functionally, catalyzes the deamination of dCTP to dUTP. In Burkholderia thailandensis (strain ATCC 700388 / DSM 13276 / CCUG 48851 / CIP 106301 / E264), this protein is dCTP deaminase.